The sequence spans 363 residues: 3-isopropylmalate dehydrogenase (363 aa).

78-91 (GKKWDDLPINQRPE) lines the NAD(+) pocket. Arg-99, Arg-109, Arg-138, and Asp-227 together coordinate substrate. Asp-227, Asp-251, and Asp-255 together coordinate Mg(2+). NAD(+) is bound at residue 285–297 (GSAPDIEGKNIAN).

It belongs to the isocitrate and isopropylmalate dehydrogenases family. LeuB type 1 subfamily. Homodimer. The cofactor is Mg(2+). Mn(2+) is required as a cofactor.

It is found in the cytoplasm. The catalysed reaction is (2R,3S)-3-isopropylmalate + NAD(+) = 4-methyl-2-oxopentanoate + CO2 + NADH. Its pathway is amino-acid biosynthesis; L-leucine biosynthesis; L-leucine from 3-methyl-2-oxobutanoate: step 3/4. Its function is as follows. Catalyzes the oxidation of 3-carboxy-2-hydroxy-4-methylpentanoate (3-isopropylmalate) to 3-carboxy-4-methyl-2-oxopentanoate. The product decarboxylates to 4-methyl-2 oxopentanoate. The protein is 3-isopropylmalate dehydrogenase of Buchnera aphidicola subsp. Uroleucon rudbeckiae.